A 643-amino-acid polypeptide reads, in one-letter code: Versicolorin B synthase (643 aa).

Positions 1–41 (MGRNWFQVTAMAVVPVVGIMAAVNPTILSSAASSLPSLGAM) are excised as a propeptide. Residues 84–85 (TA) and 105–106 (EA) contribute to the FAD site. Asn-116 carries an N-linked (GlcNAc...) asparagine glycan. 171 to 174 (GAML) serves as a coordination point for FAD. 2 N-linked (GlcNAc...) asparagine glycosylation sites follow: Asn-221 and Asn-507. Residues Ala-613 and 624 to 625 (PM) contribute to the FAD site.

Belongs to the GMC oxidoreductase family. As to quaternary structure, homodimer. FAD serves as cofactor. In terms of processing, N-glycosylated.

The protein localises to the cytoplasm. It localises to the cytosol. The enzyme catalyses (2S-3S)-versiconal hemiacetal = versicolorin B + H2O. It catalyses the reaction (S)-5'-oxoaverantin + H(+) = (1'S,5'S)-averufin + H2O. It functions in the pathway mycotoxin biosynthesis; aflatoxin biosynthesis. Dual cyclase; part of the gene cluster that mediates the biosynthesis of aflatoxins, a group of polyketide-derived furanocoumarins, and part of the most toxic and carcinogenic compounds among the known mycotoxins. The four major aflatoxins produced by A.parasiticus are aflatoxin B1 (AFB1), aflatoxin B2 (AFB2), aflatoxin G1 (AFG1) and aflatoxin G2 (AFG2). Aflk plays a dual role within the aflatoxin pathway, as a 5'-oxoaverantin cyclase that mediates conversion of 5'-oxoaverantin (OAVN) to averufin (AVF), as well as a versicolorin B synthase that converts versiconal (VAL) to versicolorin B (VERB) by closing the bisfuran ring of aflatoxin which is required for DNA-binding, thus giving to aflatoxin its activity as a mutagen. The biosynthesis of aflatoxins begins with the norsolorinic acid synthase aflC that combines a hexanoyl starter unit produced by the fatty acid synthase aflA/aflB and 7 malonyl-CoA extender units to synthesize the precursor NOR. The second step is the conversion of NOR to averantin and requires the norsolorinic acid ketoreductase aflD, which catalyzes the dehydration of norsolorinic acid to form (1'S)-averantin. The norsolorinic acid reductases aflE and aflF may also play a role in the conversion of NOR to AVN. The cytochrome P450 monooxygenase aflG then catalyzes the hydroxylation of AVN to 5'hydroxyaverantin (HAVN). The next step is performed by the 5'-hydroxyaverantin dehydrogenase aflH that transforms HAVN to 5'-oxoaverantin (OAVN) which is further converted to averufin (AVF) by aflK that plays a dual role in the pathway, as a 5'-oxoaverantin cyclase that mediates conversion of 5'-oxoaverantin, as well as a versicolorin B synthase in a later step in the pathway. The averufin oxidase aflI catalyzes the conversion of AVF to versiconal hemiacetal acetate (VHA). VHA is then the substrate for the versiconal hemiacetal acetate esterase aflJ to yield versiconal (VAL). Versicolorin B synthase aflK then converts VAL to versicolorin B (VERB) by closing the bisfuran ring of aflatoxin which is required for DNA-binding, thus giving to aflatoxin its activity as a mutagen. Then, the activity of the versicolorin B desaturase aflL leads to versicolorin A (VERA). A branch point starts from VERB since it can also be converted to dihydrodemethylsterigmatocystin (DMDHST), probably also by aflL, VERA being a precursor for aflatoxins B1 and G1, and DMDHST for aflatoxins B2 and G2. Next, the versicolorin reductase aflM and the cytochrome P450 monooxygenase aflN are involved in conversion of VERA to demethylsterigmatocystin (DMST). AflX and aflY seem also involved in this step, through probable aflX-mediated epoxide ring-opening step following versicolorin A oxidation and aflY-mediated Baeyer-Villiger oxidation required for the formation of the xanthone ring. The methyltransferase aflO then leads to the modification of DMST to sterigmatocystin (ST), and of DMDHST to dihydrosterigmatocystin (DHST). Both ST and DHST are then substrates of the O-methyltransferase aflP to yield O-methylsterigmatocystin (OMST) and dihydro-O-methylsterigmatocystin (DHOMST), respectively. Finally OMST is converted to aflatoxins B1 and G1, and DHOMST to aflatoxins B2 and G2, via the action of several enzymes including O-methylsterigmatocystin oxidoreductase aflQ, the cytochrome P450 monooxygenase aflU, but also the NADH-dependent flavin oxidoreductase nadA which is specifically required for the synthesis of AFG1. The chain is Versicolorin B synthase from Aspergillus parasiticus (strain ATCC 56775 / NRRL 5862 / SRRC 143 / SU-1).